A 143-amino-acid polypeptide reads, in one-letter code: Large ribosomal subunit protein uL11 (143 aa).

Belongs to the universal ribosomal protein uL11 family. As to quaternary structure, part of the ribosomal stalk of the 50S ribosomal subunit. Interacts with L10 and the large rRNA to form the base of the stalk. L10 forms an elongated spine to which L12 dimers bind in a sequential fashion forming a multimeric L10(L12)X complex. Post-translationally, one or more lysine residues are methylated.

Its function is as follows. Forms part of the ribosomal stalk which helps the ribosome interact with GTP-bound translation factors. In Cellvibrio japonicus (strain Ueda107) (Pseudomonas fluorescens subsp. cellulosa), this protein is Large ribosomal subunit protein uL11.